The following is a 237-amino-acid chain: RING-H2 finger protein ATL57 (237 aa).

Residues 51–71 (ALTIFILLVALFFMGFFSVYF) form a helical membrane-spanning segment. An RING-type; atypical zinc finger spans residues 140–182 (CVICLSDFEEGETVKVIPHCGHVFHVDCVDTWLSSYVTCPLCR).

It belongs to the RING-type zinc finger family. ATL subfamily.

It is found in the membrane. The enzyme catalyses S-ubiquitinyl-[E2 ubiquitin-conjugating enzyme]-L-cysteine + [acceptor protein]-L-lysine = [E2 ubiquitin-conjugating enzyme]-L-cysteine + N(6)-ubiquitinyl-[acceptor protein]-L-lysine.. The protein operates within protein modification; protein ubiquitination. This is RING-H2 finger protein ATL57 (ATL57) from Arabidopsis thaliana (Mouse-ear cress).